We begin with the raw amino-acid sequence, 418 residues long: Tyrosine--tRNA ligase (418 aa).

Y38 contributes to the L-tyrosine binding site. Positions 43–52 match the 'HIGH' region motif; it reads CTAKSLHVGS. Residues Y175 and Q179 each coordinate L-tyrosine. A 'KMSKS' region motif is present at residues 235–239; that stretch reads KMGKT. K238 lines the ATP pocket. The S4 RNA-binding domain occupies 348–413; that stretch reads LPIIKLLQIS…CGKKRHLKIM (66 aa).

Belongs to the class-I aminoacyl-tRNA synthetase family. TyrS type 1 subfamily. Homodimer.

The protein resides in the cytoplasm. It carries out the reaction tRNA(Tyr) + L-tyrosine + ATP = L-tyrosyl-tRNA(Tyr) + AMP + diphosphate + H(+). Functionally, catalyzes the attachment of tyrosine to tRNA(Tyr) in a two-step reaction: tyrosine is first activated by ATP to form Tyr-AMP and then transferred to the acceptor end of tRNA(Tyr). The chain is Tyrosine--tRNA ligase from Ehrlichia canis (strain Jake).